Here is a 224-residue protein sequence, read N- to C-terminus: Ras-related protein RABA4b (224 aa).

Ala-2 is modified (N-acetylalanine). Residue 24–31 (GDSAVGKS) participates in GTP binding. Positions 46–54 (SKATIGVEF) match the Effector region motif. GTP is bound by residues 72–76 (DTAGQ), 130–133 (NKSD), and 160–161 (SA). S-geranylgeranyl cysteine attachment occurs at residues Cys-220 and Cys-221.

This sequence belongs to the small GTPase superfamily. Rab family. As to quaternary structure, interacts with TCTP1. Expressed in roots, stems, leaves and flowers. Expressed in tips of growing root hair cells.

Its subcellular location is the early endosome membrane. The protein resides in the golgi apparatus. It localises to the trans-Golgi network membrane. Regulator of membrane trafficking. May be required for secretion of cell wall components in cells. The protein is Ras-related protein RABA4b of Arabidopsis thaliana (Mouse-ear cress).